The sequence spans 343 residues: MSDRQAALDMALKQIEKQFGKGSIMKLGEQAERRVSTVSSGSLALDVALGVGGYPRGRIIEIYGPESSGKTTVSLHAIAEVQRQGGQAAFIDAEHAMDPVYAQKLGVNIDELLLSQPDTGEQGLEIAEALVRSGAVDIIVIDSVAALVPKAEIEGDMGDSHVGLQARLMSQALRKLSGAINKSKTIAIFINQIREKVGVMFGNPETTPGGRALKFYSTVRLEVRRAEQLKQGNDIVGNKTKVKVVKNKVAPPFRVAEVDIMYGEGISREGEILDMASELDIVQKSGAWYSYNEERLGQGRENSKQFLKENTDLREEIAFFIREHHGISEDSGAEGVEDPTLLD.

Position 64-71 (64-71) interacts with ATP; that stretch reads GPESSGKT.

This sequence belongs to the RecA family.

It localises to the cytoplasm. Functionally, can catalyze the hydrolysis of ATP in the presence of single-stranded DNA, the ATP-dependent uptake of single-stranded DNA by duplex DNA, and the ATP-dependent hybridization of homologous single-stranded DNAs. It interacts with LexA causing its activation and leading to its autocatalytic cleavage. The sequence is that of Protein RecA from Bacillus cereus (strain B4264).